The sequence spans 344 residues: Holliday junction branch migration complex subunit RuvB (344 aa).

The tract at residues 1 to 182 is large ATPase domain (RuvB-L); the sequence is MRIELLNTPP…FGINSRFDYY (182 aa). Residues isoleucine 21, arginine 22, glycine 63, lysine 66, threonine 67, threonine 68, 129 to 131, arginine 172, tyrosine 182, and arginine 219 each bind ATP; that span reads EDF. Threonine 67 is a Mg(2+) binding site. The interval 183-253 is small ATPAse domain (RuvB-S); sequence APELLEGIIR…IAMKTLDCLE (71 aa). Positions 256–344 are head domain (RuvB-H); the sequence is EEGLDDMDKK…ISLFDAQPTS (89 aa). DNA contacts are provided by arginine 311 and arginine 316.

It belongs to the RuvB family. As to quaternary structure, homohexamer. Forms an RuvA(8)-RuvB(12)-Holliday junction (HJ) complex. HJ DNA is sandwiched between 2 RuvA tetramers; dsDNA enters through RuvA and exits via RuvB. An RuvB hexamer assembles on each DNA strand where it exits the tetramer. Each RuvB hexamer is contacted by two RuvA subunits (via domain III) on 2 adjacent RuvB subunits; this complex drives branch migration. In the full resolvosome a probable DNA-RuvA(4)-RuvB(12)-RuvC(2) complex forms which resolves the HJ.

The protein resides in the cytoplasm. It carries out the reaction ATP + H2O = ADP + phosphate + H(+). Its function is as follows. The RuvA-RuvB-RuvC complex processes Holliday junction (HJ) DNA during genetic recombination and DNA repair, while the RuvA-RuvB complex plays an important role in the rescue of blocked DNA replication forks via replication fork reversal (RFR). RuvA specifically binds to HJ cruciform DNA, conferring on it an open structure. The RuvB hexamer acts as an ATP-dependent pump, pulling dsDNA into and through the RuvAB complex. RuvB forms 2 homohexamers on either side of HJ DNA bound by 1 or 2 RuvA tetramers; 4 subunits per hexamer contact DNA at a time. Coordinated motions by a converter formed by DNA-disengaged RuvB subunits stimulates ATP hydrolysis and nucleotide exchange. Immobilization of the converter enables RuvB to convert the ATP-contained energy into a lever motion, pulling 2 nucleotides of DNA out of the RuvA tetramer per ATP hydrolyzed, thus driving DNA branch migration. The RuvB motors rotate together with the DNA substrate, which together with the progressing nucleotide cycle form the mechanistic basis for DNA recombination by continuous HJ branch migration. Branch migration allows RuvC to scan DNA until it finds its consensus sequence, where it cleaves and resolves cruciform DNA. The sequence is that of Holliday junction branch migration complex subunit RuvB from Pelodictyon phaeoclathratiforme (strain DSM 5477 / BU-1).